Reading from the N-terminus, the 304-residue chain is Killer cell immunoglobulin-like receptor 2DS1 (304 aa).

The first 21 residues, 1–21, serve as a signal peptide directing secretion; sequence MSLTVVSMACVGFFLLQGAWP. Over 22 to 245 the chain is Extracellular; it reads HEGVHRKPSL…SETGNPRHLH (224 aa). Ig-like C2-type domains are found at residues 42–107 and 142–205; these read EETV…VTHS and GENV…FRDS. An intrachain disulfide couples Cys-49 to Cys-100. Residues Asn-67, Asn-84, Asn-144, and Asn-178 are each glycosylated (N-linked (GlcNAc...) asparagine). Cysteines 149 and 198 form a disulfide. The segment at 220–239 is disordered; that stretch reads VTGNPSNSWPSPTEPSSETG. Positions 223–239 are enriched in low complexity; the sequence is NPSNSWPSPTEPSSETG. Residues 246 to 264 form a helical membrane-spanning segment; sequence VLIGTSVVKIPFTILLFFL. The Cytoplasmic segment spans residues 265–304; the sequence is LHRWCSDKKNAAVMDQEPAGNRTVNSEDSDEQDHQEVSYA. Positions 280–304 are disordered; that stretch reads QEPAGNRTVNSEDSDEQDHQEVSYA.

This sequence belongs to the immunoglobulin superfamily. Interacts with the adapter protein TYROBP/DAP12; the interaction enhances KIR2DS1 stability at the cell surface. In terms of tissue distribution, expressed by NK cells.

It is found in the cell membrane. Its function is as follows. Receptor on natural killer (NK) cells for some HLA-C alleles such as w6. Does not inhibit the activity of NK cells. This chain is Killer cell immunoglobulin-like receptor 2DS1, found in Homo sapiens (Human).